The chain runs to 286 residues: Aminoglycoside N(3)-acetyltransferase III (286 aa).

It belongs to the antibiotic N-acetyltransferase family.

It carries out the reaction a 2-deoxystreptamine antibiotic + acetyl-CoA = an N(3)-acetyl-2-deoxystreptamine antibiotic + CoA + H(+). Functionally, resistance to antibiotics containing the 2-deoxy-streptamine ring including gentamicin, kanamycin, tobramycin, neomycin and apramycin. In Acinetobacter baumannii, this protein is Aminoglycoside N(3)-acetyltransferase III (aacC2).